Reading from the N-terminus, the 488-residue chain is UDP-N-acetylmuramoyl-L-alanyl-D-glutamate--2,6-diaminopimelate ligase (488 aa).

Residues Leu-24, Ser-26, and 41–43 (HQV) contribute to the UDP-N-acetyl-alpha-D-muramoyl-L-alanyl-D-glutamate site. Residue 113–119 (GTNGKTT) coordinates ATP. Residues Asn-154, 155-156 (TT), Ser-182, Gln-188, and Arg-190 each bind UDP-N-acetyl-alpha-D-muramoyl-L-alanyl-D-glutamate. Position 222 is an N6-carboxylysine (Lys-222). Meso-2,6-diaminopimelate-binding positions include Arg-386, 410–413 (DNPR), Gly-461, and Glu-465. Residues 410–413 (DNPR) carry the Meso-diaminopimelate recognition motif motif.

Belongs to the MurCDEF family. MurE subfamily. Requires Mg(2+) as cofactor. Post-translationally, carboxylation is probably crucial for Mg(2+) binding and, consequently, for the gamma-phosphate positioning of ATP.

It is found in the cytoplasm. It carries out the reaction UDP-N-acetyl-alpha-D-muramoyl-L-alanyl-D-glutamate + meso-2,6-diaminopimelate + ATP = UDP-N-acetyl-alpha-D-muramoyl-L-alanyl-gamma-D-glutamyl-meso-2,6-diaminopimelate + ADP + phosphate + H(+). Its pathway is cell wall biogenesis; peptidoglycan biosynthesis. In terms of biological role, catalyzes the addition of meso-diaminopimelic acid to the nucleotide precursor UDP-N-acetylmuramoyl-L-alanyl-D-glutamate (UMAG) in the biosynthesis of bacterial cell-wall peptidoglycan. The sequence is that of UDP-N-acetylmuramoyl-L-alanyl-D-glutamate--2,6-diaminopimelate ligase from Haemophilus influenzae (strain 86-028NP).